The sequence spans 275 residues: Large ribosomal subunit protein uL2c (275 aa).

Residues Thr219–Ser267 form a disordered region. The segment covering Leu255 to Lys264 has biased composition (basic residues).

The protein belongs to the universal ribosomal protein uL2 family. In terms of assembly, part of the 50S ribosomal subunit.

It localises to the plastid. The protein localises to the chloroplast. This chain is Large ribosomal subunit protein uL2c (rpl2), found in Thalassiosira pseudonana (Marine diatom).